The sequence spans 508 residues: E3 ubiquitin-protein ligase XBAT32 (508 aa).

ANK repeat units lie at residues 50-79 (VRNSPLHYSAAQGHHEIVSLLVESGVDINL), 83-112 (RGQTALMQACQHGHWEVVLILILFGANIHR), 117-147 (NGGTALHLAALNGHPRCIRILLSEYIPSVPN), 177-206 (GGITPLHVAALNGHIETVQLLLDLGASVTQ), and 220-249 (AGSTALHYASCGGNTQCCQLLISKGACLAA). An RING-type zinc finger spans residues 321 to 372 (CAVCLERKCTVAADGCAHEFCTNCALYLSTTSITSSKTSNVTPGSVPCPLCR).

As to quaternary structure, interacts with ACS4 and ACS7. As to expression, expressed in the vascular system of primary root, vascular tissue of leaves, stems and anthers.

It carries out the reaction S-ubiquitinyl-[E2 ubiquitin-conjugating enzyme]-L-cysteine + [acceptor protein]-L-lysine = [E2 ubiquitin-conjugating enzyme]-L-cysteine + N(6)-ubiquitinyl-[acceptor protein]-L-lysine.. It functions in the pathway protein modification; protein ubiquitination. E3 ubiquitin-protein ligase that mediates ubiquitination of ACC synthases (ACS). Negatively regulates ethylene biosynthesis probably via ubiquitin-dependent degradation of ACS4 and ACS7 enzymes. Regulates lateral root formation and development by controlling ethylene production which inhibits lateral root formation at high concentration. This chain is E3 ubiquitin-protein ligase XBAT32 (XBAT32), found in Arabidopsis thaliana (Mouse-ear cress).